Reading from the N-terminus, the 100-residue chain is MIPLQHGLILAAILFVLGLTGLVIRRNLLFMLIGLEIMINASALAFVVAGSYWGQTDGQVMYILAISLAAAEASIGLALLLQLHRRRQNLNIDSVSEMRG.

3 helical membrane passes run 4–24 (LQHGLILAAILFVLGLTGLVI), 28–48 (LLFMLIGLEIMINASALAFVV), and 60–80 (VMYILAISLAAAEASIGLALL).

This sequence belongs to the complex I subunit 4L family. In terms of assembly, NDH-1 is composed of 13 different subunits. Subunits NuoA, H, J, K, L, M, N constitute the membrane sector of the complex.

It localises to the cell inner membrane. The enzyme catalyses a quinone + NADH + 5 H(+)(in) = a quinol + NAD(+) + 4 H(+)(out). In terms of biological role, NDH-1 shuttles electrons from NADH, via FMN and iron-sulfur (Fe-S) centers, to quinones in the respiratory chain. The immediate electron acceptor for the enzyme in this species is believed to be ubiquinone. Couples the redox reaction to proton translocation (for every two electrons transferred, four hydrogen ions are translocated across the cytoplasmic membrane), and thus conserves the redox energy in a proton gradient. In Citrobacter koseri (strain ATCC BAA-895 / CDC 4225-83 / SGSC4696), this protein is NADH-quinone oxidoreductase subunit K.